The primary structure comprises 498 residues: MRINPTTSGPGVSALEEKNLGRIAQIIGPVLDVAFPPGKMPNIYNALVVKGRDTVGQQINVTCEVQQLLGNNRVRAVAMSATDGLTRGMEVIDTGAPLSVPVGGATLGRIFNVLGEPVDNLGPVDTRTTSPIHRSAPAFIQLDTKLSIFETGIKVVDLLAPYRRGGKIGLFGGAGVGKTVLIMELINNIAKAHGGVSVFGGVGERTREGNDLYMEMKESGVINEQNIAESKVALVYGQMNEPPGARMRVGLTALTMAEYFRDVNEQDVLLFIDNIFRFVQAGSEVSALLGRMPSAVGYQPTLSTEMGSLQERITSTKEGSITSIQAVYVPADDLTDPAPATTFAHLDATTVLSRGLAAKGIYPAVDPLDSTSTMLQPRIVGEEHYETAQRVKQTLQRYKELQDIIAILGLDELSEEDRLTVARARKIERFLSQPFFVAEVFTGSPGKYVGLAETIRGFQLILSGELDGLPEQAFYLVGNIDEATAKAMNLEVESKLKK.

172 to 179 (GGAGVGKT) lines the ATP pocket.

It belongs to the ATPase alpha/beta chains family. As to quaternary structure, F-type ATPases have 2 components, CF(1) - the catalytic core - and CF(0) - the membrane proton channel. CF(1) has five subunits: alpha(3), beta(3), gamma(1), delta(1), epsilon(1). CF(0) has four main subunits: a(1), b(1), b'(1) and c(9-12).

It localises to the plastid. The protein localises to the chloroplast thylakoid membrane. The enzyme catalyses ATP + H2O + 4 H(+)(in) = ADP + phosphate + 5 H(+)(out). In terms of biological role, produces ATP from ADP in the presence of a proton gradient across the membrane. The catalytic sites are hosted primarily by the beta subunits. The protein is ATP synthase subunit beta, chloroplastic of Platanus occidentalis (Sycamore).